The following is a 483-amino-acid chain: MGKALMVLGTSSGAGKSLLVTALCRIFSNLGYDVVPFKSQNMSLNSAPSIEGGEISRAQYLQAIACRKKPSVRFNPILLKPEGNMRSQVIFMGKPIGSVSAKDYMLSRKEELFRKAMKVLDELKERHDLVIIEGAGSPVEINLKDYDIANTRVMLHAKAKGILVTDIDRGGSFASIVGTMELLKPEERDTIIGFVFNKFRGDKSLLEPGFEYLEKRYGKPTLGVIPYVEHRLPEEDSLAEFPKVKGELHIQIIKLPHISNFTDFEPLHWANGVDYVTRPEELKGDVIIIPGSKNTVEDLLWLRENGFEDAIIEAHREGSFVVGICGGFQMLGEKIIDTVESKRGEVKGIGLLPAKTVFEKTKRTNHLNAEVLWEPARGMAVEGYEIRFGRSVSERPFSVIKAINGAKTFEPEGAIGERAFGTYLHGIFHNFAFTERFLNFLRVEKGLEPVSIERWSIEEEIERFAKLVEENIDVERILGELGL.

A GATase cobBQ-type domain is found at 247 to 433 (ELHIQIIKLP…LHGIFHNFAF (187 aa)). Residue Cys-325 is the Nucleophile of the active site. Residue His-425 is part of the active site.

The protein belongs to the CobB/CobQ family. CobQ subfamily.

It functions in the pathway cofactor biosynthesis; adenosylcobalamin biosynthesis. Catalyzes amidations at positions B, D, E, and G on adenosylcobyrinic A,C-diamide. NH(2) groups are provided by glutamine, and one molecule of ATP is hydrogenolyzed for each amidation. The sequence is that of Probable cobyric acid synthase from Thermococcus gammatolerans (strain DSM 15229 / JCM 11827 / EJ3).